A 179-amino-acid polypeptide reads, in one-letter code: Peptidyl-tRNA hydrolase (179 aa).

Tyr-15 is a tRNA binding site. Residue His-20 is the Proton acceptor of the active site. Positions 66, 68, and 114 each coordinate tRNA.

This sequence belongs to the PTH family. Monomer.

The protein localises to the cytoplasm. It carries out the reaction an N-acyl-L-alpha-aminoacyl-tRNA + H2O = an N-acyl-L-amino acid + a tRNA + H(+). Hydrolyzes ribosome-free peptidyl-tRNAs (with 1 or more amino acids incorporated), which drop off the ribosome during protein synthesis, or as a result of ribosome stalling. Functionally, catalyzes the release of premature peptidyl moieties from peptidyl-tRNA molecules trapped in stalled 50S ribosomal subunits, and thus maintains levels of free tRNAs and 50S ribosomes. This chain is Peptidyl-tRNA hydrolase, found in Chlamydia trachomatis serovar L2 (strain ATCC VR-902B / DSM 19102 / 434/Bu).